We begin with the raw amino-acid sequence, 420 residues long: Acetyl-CoA acetyltransferase, mitochondrial (420 aa).

A mitochondrion-targeting transit peptide spans Met-1–Tyr-26. Cys-119 acts as the Acyl-thioester intermediate in catalysis. Residues Tyr-212, Lys-251 to Asp-253, and Lys-256 contribute to the CoA site. Tyr-212 serves as a coordination point for K(+). The K(+) site is built by Ala-273, Ala-274, and Ala-276. Ser-277 lines the CoA pocket. Val-374 provides a ligand contact to K(+). The active-site Proton donor/acceptor is Cys-406.

Belongs to the thiolase-like superfamily. Thiolase family. In terms of assembly, homotetramer.

Its subcellular location is the mitochondrion. It catalyses the reaction 2 acetyl-CoA = acetoacetyl-CoA + CoA. It carries out the reaction propanoyl-CoA + acetyl-CoA = 2-methyl-3-oxobutanoyl-CoA + CoA. Its pathway is lipid metabolism; fatty acid beta-oxidation. In terms of biological role, this is one of the enzymes that catalyzes the last step of the mitochondrial beta-oxidation pathway, an aerobic process breaking down fatty acids into acetyl-CoA. Using free coenzyme A/CoA, catalyzes the thiolytic cleavage of medium- to long-chain 3-oxoacyl-CoAs into acetyl-CoA and a fatty acyl-CoA shortened by two carbon atoms. The activity of the enzyme is reversible and it can also catalyze the condensation of two acetyl-CoA molecules into acetoacetyl-CoA. Thereby, it plays a major role in ketone body metabolism. This Danio rerio (Zebrafish) protein is Acetyl-CoA acetyltransferase, mitochondrial (acat1).